Reading from the N-terminus, the 310-residue chain is Dehydrodolichyl diphosphate synthase 2 (310 aa).

This sequence belongs to the UPP synthase family. Mg(2+) serves as cofactor.

It participates in protein modification; protein glycosylation. Its function is as follows. Catalyzes cis-prenyl chain elongation to produce the polyprenyl backbone of dolichol, a glycosyl carrier-lipid required for the biosynthesis of several classes of glycoprotein. The chain is Dehydrodolichyl diphosphate synthase 2 from Arabidopsis thaliana (Mouse-ear cress).